A 123-amino-acid polypeptide reads, in one-letter code: Hydrogenase maturation factor HypA (123 aa).

His2 is a binding site for Ni(2+). Cys77, Cys80, Cys96, and Cys99 together coordinate Zn(2+).

This sequence belongs to the HypA/HybF family.

In terms of biological role, involved in the maturation of [NiFe] hydrogenases. Required for nickel insertion into the metal center of the hydrogenase. This Methanococcus aeolicus (strain ATCC BAA-1280 / DSM 17508 / OCM 812 / Nankai-3) protein is Hydrogenase maturation factor HypA.